Here is a 163-residue protein sequence, read N- to C-terminus: Nucleotide-binding protein KPN78578_03700 (163 aa).

It belongs to the YajQ family.

Its function is as follows. Nucleotide-binding protein. The polypeptide is Nucleotide-binding protein KPN78578_03700 (Klebsiella pneumoniae subsp. pneumoniae (strain ATCC 700721 / MGH 78578)).